We begin with the raw amino-acid sequence, 67 residues long: Large ribosomal subunit protein bL35 (67 aa).

It belongs to the bacterial ribosomal protein bL35 family.

The polypeptide is Large ribosomal subunit protein bL35 (Leptospira interrogans serogroup Icterohaemorrhagiae serovar Lai (strain 56601)).